We begin with the raw amino-acid sequence, 508 residues long: Cytochrome P450 monooxygenase tenA (508 aa).

A helical membrane pass occupies residues 8 to 24 (VSLPYLILSACLSVILL). Cysteine 456 is a binding site for heme.

It belongs to the cytochrome P450 family. The cofactor is heme.

The protein resides in the membrane. It participates in secondary metabolite biosynthesis. In terms of biological role, cytochrome P450 monooxygenase; part of the gene cluster that mediates the biosynthesis of tenellin-type 2-pyridones, iron-chelating compounds involved in iron stress tolerance, competition with the natural competitor fungus Metarhizium robertsii and insect hosts infection. TenA catalyzes an oxidative ring expansion of pretenellin A and 14-hydropretellenin A to form the 2-pyridone core, leading to the production of pretenellin B and pyridovericin, respectively. The pathway begins with the assembly of the polyketide-amino acid backbone by the hybrid PKS-NRPS tenS with the help of the enoyl reductase tenC. These enzymes catalyze the synthesis of the pyrrolidine-2-dione intermediates pretellinin A, 11-hydropretellenin A, 12-hydropretellenin A, 13-hydropretellenin A, 14-hydropretellenin A, 12-oxopretellenin A and prototellinin D. The cytochrome P450 monooxygenase tenA then catalyzes an oxidative ring expansion of pretenellin A and 14-hydropretellenin A to form the 2-pyridone core, leading to pretenellin B and pyridovericin, respectively. The cytochrome P450 monooxygenase tenB is then required for the selective N-hydroxylation of the 2-pyridone nitrogen of yield tellinin and 15-hydroxytellenin (15-HT), respectively. The UDP-glucosyltransferase GT1 and the methyltransferase MT1, located outside the tenS gene cluster, contribute to the stepwise glycosylation and methylation of 15-HT to obtain the glycoside pyridovericin-N-O-(4-O-methyl-beta-D-glucopyranoside) (PMGP). Additional related compounds such as 1-O-methyl-15-HT, (8Z)-1-O-methyl-15-HT, and O-methyltenellin A are also produced but the enzymes involved in their biosynthesis have still to be determined. The sequence is that of Cytochrome P450 monooxygenase tenA from Beauveria bassiana (White muscardine disease fungus).